A 557-amino-acid chain; its full sequence is Syntaxin-binding protein 4 (557 aa).

Phosphoserine is present on residues S10 and S12. One can recognise a PDZ domain in the interval 19–105 (AFRVITVTKE…RSESPWEIAF (87 aa)). Residue S99 is modified to Phosphoserine; by PKB/AKT2. Over residues 142 to 154 (PSETLLPKTSSTP) the composition is skewed to low complexity. Residues 142–214 (PSETLLPKTS…SGPQGKISLN (73 aa)) are disordered. Residues 179–194 (SPITSLDNSPADTSNA) show a composition bias toward polar residues. A Phosphoserine modification is found at S216. A coiled-coil region spans residues 298–408 (ADEVGKLRQE…NKESVQDLRK (111 aa)). Residue S467 is modified to Phosphoserine. The WW domain occupies 500 to 533 (DCLPYGWEEAYTADGIKYFINHVTQTTSWIHPVM).

In terms of assembly, interacts with STX4A. Post-translationally, phosphorylated on Ser-99 by PKB/AKT2 after insulin treatment. Phosphorylation on Ser-99 abolishes the interaction with STX4A. Detected in skeletal muscle, heart, testis, adipocytes and pancreatic islet cells.

The protein resides in the cytoplasm. Its function is as follows. Plays a role in the translocation of transport vesicles from the cytoplasm to the plasma membrane. Inhibits the translocation of SLC2A4 from intracellular vesicles to the plasma membrane by STX4A binding and preventing the interaction between STX4A and VAMP2. Stimulation with insulin disrupts the interaction with STX4A, leading to increased levels of SLC2A4 at the plasma membrane. May also play a role in the regulation of insulin release by pancreatic beta cells after stimulation by glucose. The sequence is that of Syntaxin-binding protein 4 (Stxbp4) from Mus musculus (Mouse).